The sequence spans 692 residues: DNA topoisomerase 4 subunit B (692 aa).

Residues tyrosine 53, asparagine 93, aspartate 120, 162 to 168 (GLHGVGI), and lysine 393 each bind ATP. One can recognise a Toprim domain in the interval 473–587 (AELFIVEGDS…AGHLYLAVPP (115 aa)). 3 residues coordinate Mg(2+): glutamate 479, aspartate 552, and aspartate 554.

The protein belongs to the type II topoisomerase family. ParE type 1 subfamily. In terms of assembly, heterotetramer composed of ParC and ParE. The cofactor is Mg(2+). Requires Mn(2+) as cofactor. Ca(2+) is required as a cofactor.

The catalysed reaction is ATP-dependent breakage, passage and rejoining of double-stranded DNA.. In terms of biological role, topoisomerase IV is essential for chromosome segregation. It relaxes supercoiled DNA. Performs the decatenation events required during the replication of a circular DNA molecule. The polypeptide is DNA topoisomerase 4 subunit B (Bartonella bacilliformis (strain ATCC 35685 / KC583 / Herrer 020/F12,63)).